Consider the following 125-residue polypeptide: Small ribosomal subunit protein eS8 (125 aa).

The interval 1-30 is disordered; it reads MTIFQGRATRKPSGGKLRPNHSKRRYELGR.

Belongs to the eukaryotic ribosomal protein eS8 family. Part of the 30S ribosomal subunit.

This Picrophilus torridus (strain ATCC 700027 / DSM 9790 / JCM 10055 / NBRC 100828 / KAW 2/3) protein is Small ribosomal subunit protein eS8.